The following is a 378-amino-acid chain: Chaperone protein DnaJ (378 aa).

Positions 5–69 (DYYEVLGVSK…NKRANYDQFG (65 aa)) constitute a J domain. A CR-type zinc finger spans residues 135 to 217 (GSEKEISIRK…CHGKGTENKN (83 aa)). Zn(2+) contacts are provided by C148, C151, C165, C168, C191, C194, C205, and C208. 4 CXXCXGXG motif repeats span residues 148-155 (CHTCDGEG), 165-172 (CHYCNGSG), 191-198 (CPVCSGSG), and 205-212 (CPTCHGKG).

The protein belongs to the DnaJ family. As to quaternary structure, homodimer. The cofactor is Zn(2+).

The protein localises to the cytoplasm. In terms of biological role, participates actively in the response to hyperosmotic and heat shock by preventing the aggregation of stress-denatured proteins and by disaggregating proteins, also in an autonomous, DnaK-independent fashion. Unfolded proteins bind initially to DnaJ; upon interaction with the DnaJ-bound protein, DnaK hydrolyzes its bound ATP, resulting in the formation of a stable complex. GrpE releases ADP from DnaK; ATP binding to DnaK triggers the release of the substrate protein, thus completing the reaction cycle. Several rounds of ATP-dependent interactions between DnaJ, DnaK and GrpE are required for fully efficient folding. Also involved, together with DnaK and GrpE, in the DNA replication of plasmids through activation of initiation proteins. The protein is Chaperone protein DnaJ of Staphylococcus saprophyticus subsp. saprophyticus (strain ATCC 15305 / DSM 20229 / NCIMB 8711 / NCTC 7292 / S-41).